We begin with the raw amino-acid sequence, 395 residues long: G-protein coupled receptor 182 (395 aa).

Residues 1-53 are Extracellular-facing; the sequence is MSVIPSPRPVSTLEPDNDFRDIHNWTELLHLFNQTFTDCHIEFNENTKHVVLF. 2 N-linked (GlcNAc...) asparagine glycosylation sites follow: Asn-24 and Asn-33. A helical transmembrane segment spans residues 54–75; that stretch reads VFYLAIFVVGLVENVLVICVNC. The Cytoplasmic segment spans residues 76 to 86; the sequence is RRSGRVGMLNL. A helical membrane pass occupies residues 87-109; that stretch reads YILNMAIADLGIILSLPVWMLEV. Over 110-123 the chain is Extracellular; sequence MLEYTWLWGSFSCR. Cys-122 and Cys-198 are disulfide-bonded. The chain crosses the membrane as a helical span at residues 124 to 145; the sequence is FIHYFYLVNMYSSIFFLTCLSI. Over 146–166 the chain is Cytoplasmic; that stretch reads DRYVTLTNTSPSWQRHQHRIR. The chain crosses the membrane as a helical span at residues 167–189; sequence RAVCAGVWVLSAIIPLPEVVHIQ. The Extracellular portion of the chain corresponds to 190–213; the sequence is LLDGSEPMCLFLAPFETYSAWALA. A helical transmembrane segment spans residues 214-235; the sequence is VALSATILGFLLPFLLIAVFNI. Over 236–254 the chain is Cytoplasmic; that stretch reads LTACRLRRQRQTESRRHCL. A helical transmembrane segment spans residues 255-276; sequence LMWAYIVVFAICWLPYQVTMLL. The Extracellular segment spans residues 277-295; that stretch reads LTLHGTHIFLHCHLVNLLY. A helical transmembrane segment spans residues 296–316; the sequence is FFYEIIDCFSMLHCVANPILY. Over 317–395 the chain is Cytoplasmic; the sequence is NFLSPSFRGR…QTPHLHSAIL (79 aa). Ser-329 carries the post-translational modification Phosphoserine.

The protein belongs to the G-protein coupled receptor 1 family. Expressed in liver and lung.

The protein localises to the cell membrane. Its function is as follows. Orphan receptor. The protein is G-protein coupled receptor 182 (Gpr182) of Mus musculus (Mouse).